A 308-amino-acid chain; its full sequence is Serine/threonine-protein phosphatase PP1 (308 aa).

Asp-64, His-66, Asp-92, and Asn-124 together coordinate Mn(2+). His-125 (proton donor) is an active-site residue. Mn(2+)-binding residues include His-173 and His-248.

This sequence belongs to the PPP phosphatase family. PP-1 subfamily. Requires Mn(2+) as cofactor.

Its subcellular location is the cytoplasm. The catalysed reaction is O-phospho-L-seryl-[protein] + H2O = L-seryl-[protein] + phosphate. The enzyme catalyses O-phospho-L-threonyl-[protein] + H2O = L-threonyl-[protein] + phosphate. This Neurospora crassa (strain ATCC 24698 / 74-OR23-1A / CBS 708.71 / DSM 1257 / FGSC 987) protein is Serine/threonine-protein phosphatase PP1 (pph-3).